We begin with the raw amino-acid sequence, 348 residues long: tRNA N6-adenosine threonylcarbamoyltransferase (348 aa).

Fe cation contacts are provided by histidine 111 and histidine 115. Residues 134-138 (LVSGG), aspartate 167, glycine 180, aspartate 184, and asparagine 279 contribute to the substrate site. A Fe cation-binding site is contributed by aspartate 307.

It belongs to the KAE1 / TsaD family. The cofactor is Fe(2+).

It localises to the cytoplasm. It carries out the reaction L-threonylcarbamoyladenylate + adenosine(37) in tRNA = N(6)-L-threonylcarbamoyladenosine(37) in tRNA + AMP + H(+). In terms of biological role, required for the formation of a threonylcarbamoyl group on adenosine at position 37 (t(6)A37) in tRNAs that read codons beginning with adenine. Is involved in the transfer of the threonylcarbamoyl moiety of threonylcarbamoyl-AMP (TC-AMP) to the N6 group of A37, together with TsaE and TsaB. TsaD likely plays a direct catalytic role in this reaction. This chain is tRNA N6-adenosine threonylcarbamoyltransferase, found in Synechocystis sp. (strain ATCC 27184 / PCC 6803 / Kazusa).